A 311-amino-acid polypeptide reads, in one-letter code: Aspartate carbamoyltransferase catalytic subunit (311 aa).

Residues Arg55 and Thr56 each coordinate carbamoyl phosphate. L-aspartate is bound at residue Lys85. Carbamoyl phosphate is bound by residues Arg106, His135, and Gln138. Residues Arg168 and Arg230 each coordinate L-aspartate. 2 residues coordinate carbamoyl phosphate: Leu268 and Pro269.

This sequence belongs to the aspartate/ornithine carbamoyltransferase superfamily. ATCase family. Heterododecamer (2C3:3R2) of six catalytic PyrB chains organized as two trimers (C3), and six regulatory PyrI chains organized as three dimers (R2).

The enzyme catalyses carbamoyl phosphate + L-aspartate = N-carbamoyl-L-aspartate + phosphate + H(+). Its pathway is pyrimidine metabolism; UMP biosynthesis via de novo pathway; (S)-dihydroorotate from bicarbonate: step 2/3. Its function is as follows. Catalyzes the condensation of carbamoyl phosphate and aspartate to form carbamoyl aspartate and inorganic phosphate, the committed step in the de novo pyrimidine nucleotide biosynthesis pathway. The protein is Aspartate carbamoyltransferase catalytic subunit of Klebsiella pneumoniae subsp. pneumoniae (strain ATCC 700721 / MGH 78578).